The primary structure comprises 278 residues: Dermonecrotic toxin LhSicTox-alphaIV1ii (278 aa).

Residue H5 is part of the active site. Mg(2+)-binding residues include E25 and D27. Residue H41 is the Nucleophile of the active site. 2 cysteine pairs are disulfide-bonded: C45/C51 and C47/C192. D85 contributes to the Mg(2+) binding site.

This sequence belongs to the arthropod phospholipase D family. Class II subfamily. Requires Mg(2+) as cofactor. Expressed by the venom gland.

The protein resides in the secreted. The enzyme catalyses an N-(acyl)-sphingosylphosphocholine = an N-(acyl)-sphingosyl-1,3-cyclic phosphate + choline. The catalysed reaction is an N-(acyl)-sphingosylphosphoethanolamine = an N-(acyl)-sphingosyl-1,3-cyclic phosphate + ethanolamine. It carries out the reaction a 1-acyl-sn-glycero-3-phosphocholine = a 1-acyl-sn-glycero-2,3-cyclic phosphate + choline. It catalyses the reaction a 1-acyl-sn-glycero-3-phosphoethanolamine = a 1-acyl-sn-glycero-2,3-cyclic phosphate + ethanolamine. In terms of biological role, dermonecrotic toxins cleave the phosphodiester linkage between the phosphate and headgroup of certain phospholipids (sphingolipid and lysolipid substrates), forming an alcohol (often choline) and a cyclic phosphate. This toxin acts on sphingomyelin (SM). It may also act on ceramide phosphoethanolamine (CPE), lysophosphatidylcholine (LPC) and lysophosphatidylethanolamine (LPE), but not on lysophosphatidylserine (LPS), and lysophosphatidylglycerol (LPG). It acts by transphosphatidylation, releasing exclusively cyclic phosphate products as second products. Induces dermonecrosis, hemolysis, increased vascular permeability, edema, inflammatory response, and platelet aggregation. This is Dermonecrotic toxin LhSicTox-alphaIV1ii from Loxosceles hirsuta (Recluse spider).